The primary structure comprises 326 residues: Probable fructokinase-4 (326 aa).

Belongs to the carbohydrate kinase PfkB family.

It catalyses the reaction D-fructose + ATP = D-fructose 6-phosphate + ADP + H(+). It functions in the pathway glycan biosynthesis; starch biosynthesis. May play an important role in maintaining the flux of carbon towards starch formation. This Arabidopsis thaliana (Mouse-ear cress) protein is Probable fructokinase-4.